The primary structure comprises 37 residues: Large ribosomal subunit protein bL36 (37 aa).

The protein belongs to the bacterial ribosomal protein bL36 family.

This is Large ribosomal subunit protein bL36 from Salinispora tropica (strain ATCC BAA-916 / DSM 44818 / JCM 13857 / NBRC 105044 / CNB-440).